A 384-amino-acid polypeptide reads, in one-letter code: N-acetyldiaminopimelate deacetylase (384 aa).

The active site involves Asp-74. Glu-133 (proton acceptor) is an active-site residue.

This sequence belongs to the peptidase M20A family. N-acetyldiaminopimelate deacetylase subfamily.

The enzyme catalyses N-acetyl-(2S,6S)-2,6-diaminopimelate + H2O = (2S,6S)-2,6-diaminopimelate + acetate. The protein operates within amino-acid biosynthesis; L-lysine biosynthesis via DAP pathway; LL-2,6-diaminopimelate from (S)-tetrahydrodipicolinate (acetylase route): step 3/3. In terms of biological role, catalyzes the conversion of N-acetyl-diaminopimelate to diaminopimelate and acetate. The polypeptide is N-acetyldiaminopimelate deacetylase (Pediococcus pentosaceus (strain ATCC 25745 / CCUG 21536 / LMG 10740 / 183-1w)).